Here is a 1250-residue protein sequence, read N- to C-terminus: SRC kinase signaling inhibitor 1 (1250 aa).

Basic and acidic residues predominate over residues 19-45; it reads AEGRARSPREEVGPRDPGGRGEPDPER. Residues 19 to 78 form a disordered region; sequence AEGRARSPREEVGPRDPGGRGEPDPERSSPPMLSADDAEYPREYRTLGGGGGGGSGGRRF. 2 positions are modified to phosphoserine: Ser47 and Ser52. The segment covering 65 to 75 has biased composition (gly residues); the sequence is LGGGGGGGSGG. A Phosphoserine modification is found at Ser79. The residue at position 86 (Thr86) is a Phosphothreonine. 7 positions are modified to phosphoserine: Ser87, Ser98, Ser211, Ser233, Ser237, Ser247, and Ser293. A Phosphotyrosine modification is found at Tyr309. The tract at residues 352 to 448 is disordered; the sequence is ASRESSPTRR…RRDVKPDEDL (97 aa). The span at 354–364 shows a compositional bias: polar residues; it reads RESSPTRRLNN. Residues 365–374 are compositionally biased toward low complexity; the sequence is LSPASHLASS. 3 positions are modified to phosphoserine: Ser366, Ser375, and Ser392. Low complexity predominate over residues 381–399; that stretch reads PSGLPSGLPSGSPSRSRLS. Omega-N-methylarginine occurs at positions 397 and 404. Ser411, Ser430, and Ser432 each carry phosphoserine. Positions 437–448 are enriched in basic and acidic residues; that stretch reads LERRDVKPDEDL. At Tyr464 the chain carries Phosphotyrosine. The disordered stretch occupies residues 538–710; that stretch reads PSSPQKLADV…ASSTPAGQPT (173 aa). The span at 552 to 563 shows a compositional bias: pro residues; it reads GGPPPPHSPYSG. A phosphoserine mark is found at Ser559, Ser562, and Ser566. Arg567 carries the omega-N-methylarginine modification. 5 positions are modified to phosphoserine: Ser569, Ser579, Ser581, Ser583, and Ser588. Residues 590-607 are compositionally biased toward low complexity; it reads GGKARSTGSASTAGAPPS. A compositionally biased stretch (basic and acidic residues) spans 628–640; sequence KDTETRERMEAME. Phosphoserine occurs at positions 664 and 688. Phosphothreonine is present on residues Thr691 and Thr704. Residues 701-710 show a composition bias toward low complexity; that stretch reads ASSTPAGQPT. 2 coiled-coil regions span residues 712–753 and 793–813; these read VSRL…RALL and EELI…IQRD. Residues 714–764 form an interaction with SNAP25 region; sequence RLQMQLHLRGLQNSASDLRGQLQQLRNVQLQNQESVRALLKPTEADVSMRV. Residues Ser911 and Ser933 each carry the phosphoserine modification. Disordered stretches follow at residues 924-982 and 1016-1094; these read GLDF…ERDW and DCAS…TGEV. The residue at position 951 (Thr951) is a Phosphothreonine. Ser1054 carries the post-translational modification Phosphoserine. Residues 1069 to 1078 show a composition bias toward pro residues; that stretch reads KSPPPPPPRR. A phosphoserine mark is found at Ser1110 and Ser1127. The interval 1155–1250 is disordered; sequence ELESGGSSVP…FGARNSSISF (96 aa). Over residues 1217-1250 the composition is skewed to polar residues; sequence PNETSSPGSEKPSGSRTSIPVLTSFGARNSSISF.

This sequence belongs to the SRCIN1 family. In terms of assembly, interacts with the N-terminal coiled-coil region of SNAP25. Interacts with BCAR1/p130Cas and SRC through its C-terminal domain. Interacts with CSK, CTTN, SORBS3/vinexin, SYP and MAPRE3/EB3. Post-translationally, tyrosine-phosphorylated in response to EGF and to cell adhesion to integrin ligands. Expressed predominantly in central nervous system with high levels detected in cortex, cerebellum, midbrain and spinal cord (at protein level). Also expressed in testis and epithelial-rich tissues such as mammary gland, lung and kidney.

It localises to the cytoplasm. It is found in the cytoskeleton. The protein localises to the cell projection. Its subcellular location is the axon. The protein resides in the dendrite. It localises to the presynapse. It is found in the postsynapse. The protein localises to the postsynaptic density. In terms of biological role, acts as a negative regulator of SRC by activating CSK which inhibits SRC activity and downstream signaling, leading to impaired cell spreading and migration. Regulates dendritic spine morphology. Involved in calcium-dependent exocytosis. May play a role in neurotransmitter release or synapse maintenance. The sequence is that of SRC kinase signaling inhibitor 1 (Srcin1) from Mus musculus (Mouse).